The primary structure comprises 409 residues: Toluene 1,2-dioxygenase system ferredoxin--NAD(+) reductase component (409 aa).

4–35 (HVAIIGNGVGGFTTAQALRAEGFEGRISLIGD) is an FAD binding site. 145 to 173 (RLLIVGGGLIGCEVATTARKLGLSVTILE) contributes to the NAD(+) binding site.

This sequence belongs to the bacterial ring-hydroxylating dioxygenase ferredoxin reductase family. This dioxygenase system consists of four proteins: the two subunits of the hydroxylase component (todC1 and todC2), a ferredoxin (TodB) and a ferredoxin reductase (TodA). FAD serves as cofactor.

It catalyses the reaction 2 reduced [2Fe-2S]-[ferredoxin] + NAD(+) + H(+) = 2 oxidized [2Fe-2S]-[ferredoxin] + NADH. Its pathway is xenobiotic degradation; toluene degradation. Functionally, part of the electron transfer component of toluene 1,2-dioxygenase, transfers electrons from ferredoxin (TodB) to NADH. The protein is Toluene 1,2-dioxygenase system ferredoxin--NAD(+) reductase component (todA) of Pseudomonas putida (Arthrobacter siderocapsulatus).